A 487-amino-acid polypeptide reads, in one-letter code: L-tartrate/succinate antiporter (487 aa).

Helical transmembrane passes span 10-30, 33-53, 54-74, 93-113, 137-157, 189-209, 236-256, 292-312, 313-333, 340-360, 370-390, 393-413, 418-438, and 465-485; these read YLAP…AGLE, TWLY…EPVP, GAVV…WLLF, WAVS…FMFG, TLFL…VTPS, IGSY…AIFL, FLGM…LAYV, LMVG…AAMV, GYSV…DIVS, VFFW…TGFI, SLSG…FYLL, FFAS…AAAL, IPLP…SILT, and IFGL…MPVV.

It belongs to the SLC13A/DASS transporter (TC 2.A.47) family. DIT1 subfamily.

The protein resides in the cell inner membrane. It catalyses the reaction (2R,3R)-tartrate(out) + succinate(in) = (2R,3R)-tartrate(in) + succinate(out). Catalyzes the uptake of tartrate in exchange for intracellular succinate. Essential for anaerobic L-tartrate fermentation. This is L-tartrate/succinate antiporter (ttdT) from Escherichia coli O157:H7.